Here is a 932-residue protein sequence, read N- to C-terminus: F-box protein COS111 (932 aa).

A disordered region spans residues Val-29 to Ser-63. Residues Arg-53–Ser-63 show a composition bias toward low complexity. The 48-residue stretch at Arg-146 to Pro-193 folds into the F-box domain. Residues Leu-346–Gly-358 show a composition bias toward polar residues. Disordered stretches follow at residues Leu-346–Ser-369, Thr-389–Phe-450, Ile-470–Phe-500, and Ser-863–Pro-893. Composition is skewed to low complexity over residues Asn-395 to Asp-431 and Thr-438 to Ser-447. Residues Asp-876–Ser-890 are compositionally biased toward polar residues.

Functionally, F-box protein probably involved in ubiquitin conjugation pathway. This chain is F-box protein COS111 (COS111), found in Candida glabrata (strain ATCC 2001 / BCRC 20586 / JCM 3761 / NBRC 0622 / NRRL Y-65 / CBS 138) (Yeast).